Reading from the N-terminus, the 676-residue chain is E3 ubiquitin-protein ligase ICP0 (676 aa).

The RING-type zinc-finger motif lies at 13–52 (CCICLDAITGAARALPCLHAFCLACIRRWLEGRPTCPLCK). Disordered stretches follow at residues 101 to 153 (DLTA…GGRA), 266 to 517 (HLIP…AGAQ), and 555 to 676 (AAIS…AWRQ). Gly residues predominate over residues 123 to 153 (EAGGGAGGAEEAGEARGAGAGRAAGAAGGRA). Acidic residues predominate over residues 286-303 (SDSDSEGSEDDSWSESEE). Positions 304 to 314 (SSSGLSTSDLT) are enriched in low complexity. Acidic residues predominate over residues 315-328 (AIDDTETEPETDAE). The segment covering 351–361 (YVSTRGRQTPA) has biased composition (polar residues). 2 stretches are compositionally biased toward low complexity: residues 375–388 (GRAA…SSRS) and 397–411 (LPAA…QARA). Residues 422 to 439 (GAGLGVAAGETAGWGAGS) are compositionally biased toward gly residues. Residues 440 to 450 (EEGRGERRARL) are compositionally biased toward basic and acidic residues. Pro residues predominate over residues 474-484 (TPAPAPAPAPA). Residues 555 to 597 (AAISTRAPTPSPAGRAPAADPRRAGAPALAGAARAEVGRNGNP) show a composition bias toward low complexity.

It belongs to the simplexviruses ICp0 family. In terms of processing, auto-ubiquitinated. Transactivation activity is possibly regulated through phosphorylation by casein kinase II.

It carries out the reaction S-ubiquitinyl-[E2 ubiquitin-conjugating enzyme]-L-cysteine + [acceptor protein]-L-lysine = [E2 ubiquitin-conjugating enzyme]-L-cysteine + N(6)-ubiquitinyl-[acceptor protein]-L-lysine.. Functionally, evades nuclear antiviral defenses triggered by dsDNA viruses. Acts during the initial stages of lytic infection and the reactivation of latent viral genome. Prevents the antiviral effect of nuclear bodies by degrading host PML and SP100. This chain is E3 ubiquitin-protein ligase ICP0 (BICP0), found in Bovine herpesvirus 1.1 (strain Cooper) (BoHV-1).